Here is a 191-residue protein sequence, read N- to C-terminus: dCTP deaminase, dUMP-forming (191 aa).

Residues 101 to 106, aspartate 119, 127 to 129, glutamine 148, tyrosine 162, and glutamine 174 contribute to the dCTP site; these read KSSLGR and TLE. Glutamate 129 (proton donor/acceptor) is an active-site residue.

The protein belongs to the dCTP deaminase family. As to quaternary structure, homotrimer.

It carries out the reaction dCTP + 2 H2O = dUMP + NH4(+) + diphosphate. The protein operates within pyrimidine metabolism; dUMP biosynthesis; dUMP from dCTP: step 1/1. Its function is as follows. Bifunctional enzyme that catalyzes both the deamination of dCTP to dUTP and the hydrolysis of dUTP to dUMP without releasing the toxic dUTP intermediate. The protein is dCTP deaminase, dUMP-forming of Streptomyces avermitilis (strain ATCC 31267 / DSM 46492 / JCM 5070 / NBRC 14893 / NCIMB 12804 / NRRL 8165 / MA-4680).